The primary structure comprises 681 residues: Heat shock 70 kDa protein (681 aa).

The span at 655-665 (NFPGGMPGAGM) shows a compositional bias: gly residues. The interval 655–681 (NFPGGMPGAGMPGNAPAGSGPTVEEVD) is disordered. Residues 666–675 (PGNAPAGSGP) show a composition bias toward low complexity.

It belongs to the heat shock protein 70 family.

The protein is Heat shock 70 kDa protein of Plasmodium falciparum.